The chain runs to 425 residues: MLNIKWIRENKELFDEKLSQRFIEPMSSKIAMLDGEKRKITSLIQELQHARKVKSKILGNMASKSGEEFEGLQRDVKHINEKLEALEHDLNNNNELNELLNMFPNIPDEEVPYGMDASMNKLVRTYGETNPNALNKQHFELGIKLNLMDFEQTAKISGTKFVTLKGDLAKLERALINFMIDVHTKEWDFFEISPPVLVRDNAMYNAGQLPKFAEESFATTNGYRLIPTAEVSLVNMVADTIIPREKLPIRYVAYTQCFRSEAGSSGRDTRGMIRLHQFGKVELVSITTPEESTNEHEYITNASETILQKLNLPYRVMLLCTGDMGFAAKKTYDIEVWLPGQKQYREIASCSNCGDFQARRMKARYKEFGSNETTLVHTLNASGLPIGRTMVAILENYQNEDGSITIPDVLINYMGGLQKIIAYSE.

228-230 (TAE) lines the L-serine pocket. Position 259–261 (259–261 (RSE)) interacts with ATP. L-serine is bound at residue glutamate 282. 346–349 (EIAS) serves as a coordination point for ATP. Residue serine 382 participates in L-serine binding.

The protein belongs to the class-II aminoacyl-tRNA synthetase family. Type-1 seryl-tRNA synthetase subfamily. In terms of assembly, homodimer. The tRNA molecule binds across the dimer.

The protein resides in the cytoplasm. The catalysed reaction is tRNA(Ser) + L-serine + ATP = L-seryl-tRNA(Ser) + AMP + diphosphate + H(+). The enzyme catalyses tRNA(Sec) + L-serine + ATP = L-seryl-tRNA(Sec) + AMP + diphosphate + H(+). It participates in aminoacyl-tRNA biosynthesis; selenocysteinyl-tRNA(Sec) biosynthesis; L-seryl-tRNA(Sec) from L-serine and tRNA(Sec): step 1/1. Functionally, catalyzes the attachment of serine to tRNA(Ser). Is also able to aminoacylate tRNA(Sec) with serine, to form the misacylated tRNA L-seryl-tRNA(Sec), which will be further converted into selenocysteinyl-tRNA(Sec). In Rickettsia rickettsii (strain Iowa), this protein is Serine--tRNA ligase.